A 121-amino-acid chain; its full sequence is Large ribosomal subunit protein uL14 (121 aa).

The protein belongs to the universal ribosomal protein uL14 family. As to quaternary structure, part of the 50S ribosomal subunit. Forms a cluster with proteins L3 and L19. In the 70S ribosome, L14 and L19 interact and together make contacts with the 16S rRNA in bridges B5 and B8.

Its function is as follows. Binds to 23S rRNA. Forms part of two intersubunit bridges in the 70S ribosome. This is Large ribosomal subunit protein uL14 from Synechococcus elongatus (strain ATCC 33912 / PCC 7942 / FACHB-805) (Anacystis nidulans R2).